The sequence spans 487 residues: Malonate-semialdehyde dehydrogenase (487 aa).

A150, F152, K176, E179, R180, S229, and T251 together coordinate NAD(+). C284 functions as the Nucleophile in the catalytic mechanism. E382 is an NAD(+) binding site.

It belongs to the aldehyde dehydrogenase family. IolA subfamily. As to quaternary structure, homotetramer.

The catalysed reaction is 3-oxopropanoate + NAD(+) + CoA + H2O = hydrogencarbonate + acetyl-CoA + NADH + H(+). It carries out the reaction 2-methyl-3-oxopropanoate + NAD(+) + CoA + H2O = propanoyl-CoA + hydrogencarbonate + NADH + H(+). It functions in the pathway polyol metabolism; myo-inositol degradation into acetyl-CoA; acetyl-CoA from myo-inositol: step 7/7. Catalyzes the oxidation of malonate semialdehyde (MSA) and methylmalonate semialdehyde (MMSA) into acetyl-CoA and propanoyl-CoA, respectively. Is involved in a myo-inositol catabolic pathway. Bicarbonate, and not CO2, is the end-product of the enzymatic reaction. The sequence is that of Malonate-semialdehyde dehydrogenase from Bacillus velezensis (strain DSM 23117 / BGSC 10A6 / LMG 26770 / FZB42) (Bacillus amyloliquefaciens subsp. plantarum).